The following is a 359-amino-acid chain: Serpentine receptor class epsilon-26 (359 aa).

7 consecutive transmembrane segments (helical) span residues 29 to 49, 66 to 86, 127 to 147, 172 to 192, 195 to 215, 256 to 276, and 282 to 302; these read CAISSAELPFYMLSAYVVFVS, IGVPMFGSWFLLIAGKLITIL, VAGFLEIHFGFSVIFVGLAIV, FIIIYQFLAISISLGILFNIL, YVLNASWILCILIGTIMYYYI, LVFVVLATIVVMGFGIVALVL, and FFMHFGENTLFCYPLYIFLVV.

Belongs to the nematode receptor-like protein sre family.

It is found in the membrane. The protein is Serpentine receptor class epsilon-26 (sre-26) of Caenorhabditis elegans.